Here is a 672-residue protein sequence, read N- to C-terminus: Beta-galactosidase BgaB (672 aa).

Arg-109 provides a ligand contact to substrate. Residue Cys-113 participates in Zn(2+) binding. Asn-147 lines the substrate pocket. Glu-148 (proton donor) is an active-site residue. Cys-156, Cys-158, and Cys-161 together coordinate Zn(2+). Catalysis depends on Glu-303, which acts as the Nucleophile. Residues Trp-311 and 351–354 (EKFH) each bind substrate.

Belongs to the glycosyl hydrolase 42 family.

The enzyme catalyses Hydrolysis of terminal non-reducing beta-D-galactose residues in beta-D-galactosides.. This chain is Beta-galactosidase BgaB, found in Geobacillus sp. (strain Y412MC61).